A 292-amino-acid chain; its full sequence is Elongation factor Ts (292 aa).

The interval 80 to 83 (TDFV) is involved in Mg(2+) ion dislocation from EF-Tu.

This sequence belongs to the EF-Ts family.

It localises to the cytoplasm. Functionally, associates with the EF-Tu.GDP complex and induces the exchange of GDP to GTP. It remains bound to the aminoacyl-tRNA.EF-Tu.GTP complex up to the GTP hydrolysis stage on the ribosome. In Limosilactobacillus fermentum (strain NBRC 3956 / LMG 18251) (Lactobacillus fermentum), this protein is Elongation factor Ts.